The primary structure comprises 929 residues: Lon protease homolog 2, peroxisomal (929 aa).

One can recognise a Lon N-terminal domain in the interval 11–257 (LPLVPLPKGS…RVVEILTRQL (247 aa)). Positions 302-325 (GLTPPGLSAGRNNDNDDKESNEVD) are disordered. 484-491 (GPPGVGKT) is an ATP binding site. The region spanning 727–914 (HGRPGVVTGL…WEAIRQVWPD (188 aa)) is the Lon proteolytic domain. Residues S820 and K863 contribute to the active site. The Microbody targeting signal signature appears at 927 to 929 (SRL).

Belongs to the peptidase S16 family.

It is found in the peroxisome matrix. It carries out the reaction Hydrolysis of proteins in presence of ATP.. Its function is as follows. ATP-dependent serine protease that mediates the selective degradation of misfolded and unassembled polypeptides in the peroxisomal matrix. Necessary for type 2 peroxisome targeting signal (PTS2)-containing protein processing and facilitates peroxisome matrix protein import. This is Lon protease homolog 2, peroxisomal from Aspergillus niger (strain ATCC MYA-4892 / CBS 513.88 / FGSC A1513).